Reading from the N-terminus, the 323-residue chain is o-succinylbenzoate synthase (323 aa).

Residue Lys134 is the Proton donor of the active site. Asp162, Glu191, and Asp214 together coordinate Mg(2+). Lys236 acts as the Proton acceptor in catalysis.

The protein belongs to the mandelate racemase/muconate lactonizing enzyme family. MenC type 1 subfamily. A divalent metal cation is required as a cofactor.

It catalyses the reaction (1R,6R)-6-hydroxy-2-succinyl-cyclohexa-2,4-diene-1-carboxylate = 2-succinylbenzoate + H2O. It participates in quinol/quinone metabolism; 1,4-dihydroxy-2-naphthoate biosynthesis; 1,4-dihydroxy-2-naphthoate from chorismate: step 4/7. Its pathway is quinol/quinone metabolism; menaquinone biosynthesis. Converts 2-succinyl-6-hydroxy-2,4-cyclohexadiene-1-carboxylate (SHCHC) to 2-succinylbenzoate (OSB). This is o-succinylbenzoate synthase from Yersinia enterocolitica serotype O:8 / biotype 1B (strain NCTC 13174 / 8081).